Consider the following 275-residue polypeptide: Diaminopimelate epimerase (275 aa).

Positions 12, 45, and 65 each coordinate substrate. C74 (proton donor) is an active-site residue. Residues 75–76 (GN), N158, N191, and 209–210 (ER) contribute to the substrate site. The active-site Proton acceptor is C218. 219–220 (GT) lines the substrate pocket.

The protein belongs to the diaminopimelate epimerase family. Homodimer.

The protein resides in the cytoplasm. It carries out the reaction (2S,6S)-2,6-diaminopimelate = meso-2,6-diaminopimelate. It functions in the pathway amino-acid biosynthesis; L-lysine biosynthesis via DAP pathway; DL-2,6-diaminopimelate from LL-2,6-diaminopimelate: step 1/1. In terms of biological role, catalyzes the stereoinversion of LL-2,6-diaminopimelate (L,L-DAP) to meso-diaminopimelate (meso-DAP), a precursor of L-lysine and an essential component of the bacterial peptidoglycan. The protein is Diaminopimelate epimerase of Shewanella baltica (strain OS223).